A 346-amino-acid chain; its full sequence is L-threonine 3-dehydrogenase (346 aa).

Cys42 serves as a coordination point for Zn(2+). Active-site charge relay system residues include Thr44 and His47. His67, Glu68, Cys97, Cys100, Cys103, and Cys111 together coordinate Zn(2+). NAD(+) is bound by residues Ile179, Asp199, Arg204, 266 to 268, and 291 to 292; these read LSL and IT.

It belongs to the zinc-containing alcohol dehydrogenase family. Homotetramer. Zn(2+) serves as cofactor.

The protein resides in the cytoplasm. It catalyses the reaction L-threonine + NAD(+) = (2S)-2-amino-3-oxobutanoate + NADH + H(+). It participates in amino-acid degradation; L-threonine degradation via oxydo-reductase pathway; glycine from L-threonine: step 1/2. Catalyzes the NAD(+)-dependent oxidation of L-threonine to 2-amino-3-ketobutyrate. This Bacillus licheniformis (strain ATCC 14580 / DSM 13 / JCM 2505 / CCUG 7422 / NBRC 12200 / NCIMB 9375 / NCTC 10341 / NRRL NRS-1264 / Gibson 46) protein is L-threonine 3-dehydrogenase.